The sequence spans 310 residues: Methionyl-tRNA formyltransferase (310 aa).

111 to 114 contributes to the (6S)-5,6,7,8-tetrahydrofolate binding site; sequence SILP.

The protein belongs to the Fmt family.

The enzyme catalyses L-methionyl-tRNA(fMet) + (6R)-10-formyltetrahydrofolate = N-formyl-L-methionyl-tRNA(fMet) + (6S)-5,6,7,8-tetrahydrofolate + H(+). Functionally, attaches a formyl group to the free amino group of methionyl-tRNA(fMet). The formyl group appears to play a dual role in the initiator identity of N-formylmethionyl-tRNA by promoting its recognition by IF2 and preventing the misappropriation of this tRNA by the elongation apparatus. This chain is Methionyl-tRNA formyltransferase, found in Finegoldia magna (strain ATCC 29328 / DSM 20472 / WAL 2508) (Peptostreptococcus magnus).